Reading from the N-terminus, the 416-residue chain is Alpha-1-antiproteinase (416 aa).

An N-terminal signal peptide occupies residues 1–24 (MALSITRGLLLLAALCCLAPISLA). 4 N-linked (GlcNAc...) asparagine glycosylation sites follow: Asn-68, Asn-105, Asn-143, and Asn-269. The interval 371–390 (GSTFLEAIPMSLPPDVEFNR) is RCL. Ser-381 is subject to Phosphoserine.

It belongs to the serpin family. As to quaternary structure, interacts with CELA2A. Interacts with ERGIC3 and LMAN1/ERGIC53. Interacts with PRSS1/Trypsin. In terms of tissue distribution, plasma.

It is found in the secreted. In terms of biological role, inhibitor of serine proteases. Its primary target is elastase, but it also has a moderate affinity for plasmin and thrombin. Inhibits trypsin, chymotrypsin and plasminogen activator. The polypeptide is Alpha-1-antiproteinase (SERPINA1) (Bos taurus (Bovine)).